Consider the following 278-residue polypeptide: Tumor necrosis factor receptor superfamily member 5 (278 aa).

An N-terminal signal peptide occupies residues 1 to 20 (MVRLPLKCLLWGCFLTAVHP). Over 21-194 (EPPTSCKENQ…VCGFQSRMRA (174 aa)) the chain is Extracellular. 4 TNFR-Cys repeats span residues 25–60 (SCKENQYPTNSRCCNLCPPGQKLVNHCTEVTETECL), 61–103 (PCSS…DTTC), 104–144 (VCSE…TICE), and 145–187 (PCPV…VVCG). Cystine bridges form between C26–C37, C38–C51, C41–C59, C62–C77, C83–C103, C105–C119, C111–C116, and C125–C143. N153 and N180 each carry an N-linked (GlcNAc...) asparagine glycan. Residues 195-215 (LVVIPITLGILFAVLLVFLCI) form a helical membrane-spanning segment. Residues 216–278 (RKVTKEQETK…ESRISVQERE (63 aa)) lie on the Cytoplasmic side of the membrane.

Monomer and homodimer. Interacts with TRAF1, TRAF2, TRAF3, TRAF5 and TRAF6. Interacts with TRAF6 and MAP3K8; the interaction is required for ERK activation.

The protein localises to the membrane. Functionally, receptor for TNFSF5/CD40LG. Transduces TRAF6- and MAP3K8-mediated signals that activate ERK in macrophages and B cells, leading to induction of immunoglobulin secretion. The polypeptide is Tumor necrosis factor receptor superfamily member 5 (CD40) (Sus scrofa (Pig)).